The following is a 614-amino-acid chain: Leucine aminopeptidase 2 (614 aa).

A peptide-binding positions include 139–141 and 271–276; these read QCQ and PYGGME. His-300 is a Zn(2+) binding site. Glu-301 acts as the Proton acceptor in catalysis. The Zn(2+) site is built by His-304 and Glu-323. Residue Tyr-385 is the Proton donor of the active site.

Belongs to the peptidase M1 family. Zn(2+) serves as cofactor.

The protein resides in the cytoplasm. Its subcellular location is the nucleus. It carries out the reaction an epoxide + H2O = an ethanediol. Functionally, aminopeptidase that preferentially cleaves di- and tripeptides. Also has low epoxide hydrolase activity (in vitro). Can hydrolyze the epoxide leukotriene LTA(4) but it forms preferentially 5,6-dihydroxy-7,9,11,14-eicosatetraenoic acid rather than the cytokine leukotriene B(4) as the product compared to the homologous mammalian enzyme (in vitro). This chain is Leucine aminopeptidase 2, found in Aspergillus fumigatus (strain ATCC MYA-4609 / CBS 101355 / FGSC A1100 / Af293) (Neosartorya fumigata).